The sequence spans 176 residues: ATP synthase subunit delta (176 aa).

It belongs to the ATPase delta chain family. In terms of assembly, F-type ATPases have 2 components, F(1) - the catalytic core - and F(0) - the membrane proton channel. F(1) has five subunits: alpha(3), beta(3), gamma(1), delta(1), epsilon(1). F(0) has three main subunits: a(1), b(2) and c(10-14). The alpha and beta chains form an alternating ring which encloses part of the gamma chain. F(1) is attached to F(0) by a central stalk formed by the gamma and epsilon chains, while a peripheral stalk is formed by the delta and b chains.

It localises to the cell inner membrane. Functionally, f(1)F(0) ATP synthase produces ATP from ADP in the presence of a proton or sodium gradient. F-type ATPases consist of two structural domains, F(1) containing the extramembraneous catalytic core and F(0) containing the membrane proton channel, linked together by a central stalk and a peripheral stalk. During catalysis, ATP synthesis in the catalytic domain of F(1) is coupled via a rotary mechanism of the central stalk subunits to proton translocation. Its function is as follows. This protein is part of the stalk that links CF(0) to CF(1). It either transmits conformational changes from CF(0) to CF(1) or is implicated in proton conduction. The protein is ATP synthase subunit delta of Actinobacillus succinogenes (strain ATCC 55618 / DSM 22257 / CCUG 43843 / 130Z).